A 104-amino-acid polypeptide reads, in one-letter code: Transcription elongation factor A protein-like 9 (104 aa).

A compositionally biased stretch (basic and acidic residues) spans 1–27 (MKSCQKMEGKPENESEPKHEEEPKPEE). The disordered stretch occupies residues 1 to 44 (MKSCQKMEGKPENESEPKHEEEPKPEEKPEEEEKLEEEAKAKGT).

This sequence belongs to the TFS-II family. TFA subfamily.

Its subcellular location is the nucleus. In terms of biological role, may be involved in transcriptional regulation. In Homo sapiens (Human), this protein is Transcription elongation factor A protein-like 9.